The primary structure comprises 890 residues: MAAAASSSSAASLPQTGAEIRSAFLRFYEERGHKVMASASLIPEDPTVLLTIAGMLPFKPVFLGQQERPAPRATSSQKCIRTNDIENVGRTARHHTFFEMLGNFSFGDYFKQQAIEWAWQLSTEVYGIDPKHLVVSVFREDDEAEQIWRDVVGVNPKRIIRMDEADNFWASGPTGPCGPCSEIYYDFKPELGDEGIDLEDDDRFIEFYNLVFMQYNRDAEGSLTPLANRNIDTGLGLERMAQILQKVPNNYETDLIFPLIQAAADCAGVDYHQLDDAGKTSLKVIGDHSRAVTQLICDGVTASNLGRGYILRRLLRRVVRHGRLLGINKPFLVMMGEASIALLKDAHPSVLERQEVILAELQREESRFLETLERGEKLLSEVLDSKPKQISGAQAFELYDTYGFPLELTQEIAEEQGLEVDLAGFEEAMEQQRQRAKAAAVSIDLTLQDAIDQVVATQKATAFQGYQRLEQPSCVQALVANGEPATSASAGDHVQIVLESTPFYGEGGGQVGDRGVLSGADVIVAIESVSRSRDVFVHAGRIERGQLTVGDAITAQVDRACRRRAQANHTATHLLQAALKQVVDPGIGQAGSLVDFDRLRFDFHAPQAVTTEQLGQIETLINGWIAEAHGLLVEEMAIDQAKAAGAVAMFGEKYADVVRVVDVPGVSMELCGGTHVANTAEIGLFKIVGESGVAAGIRRIEAVAGASVLGYLNERELVVKQLGDRFKAQPGEIVERVVALQDELKSTGKALIAAQAELAVAKSAALATKAVAIGSFQLLVERLDGVDGTGLQGAAQSLAAQLGDGAAVVLGGLPDPSDQGKVILVAAFGKDVIAAKQQAGKFIGTIAKLCGGGGGGRPNLAQAGGRDGAALAGALETARMELTAALQQQG.

Positions 569, 573, 671, and 675 each coordinate Zn(2+).

The protein belongs to the class-II aminoacyl-tRNA synthetase family. The cofactor is Zn(2+).

It localises to the cytoplasm. The catalysed reaction is tRNA(Ala) + L-alanine + ATP = L-alanyl-tRNA(Ala) + AMP + diphosphate. In terms of biological role, catalyzes the attachment of alanine to tRNA(Ala) in a two-step reaction: alanine is first activated by ATP to form Ala-AMP and then transferred to the acceptor end of tRNA(Ala). Also edits incorrectly charged Ser-tRNA(Ala) and Gly-tRNA(Ala) via its editing domain. The chain is Alanine--tRNA ligase from Synechococcus sp. (strain CC9902).